A 75-amino-acid polypeptide reads, in one-letter code: Large ribosomal subunit protein uL29 (75 aa).

This sequence belongs to the universal ribosomal protein uL29 family.

This chain is Large ribosomal subunit protein uL29, found in Nostoc punctiforme (strain ATCC 29133 / PCC 73102).